We begin with the raw amino-acid sequence, 506 residues long: ATP synthase subunit alpha (506 aa).

An ATP-binding site is contributed by 170 to 177 (GDRQTGKT).

This sequence belongs to the ATPase alpha/beta chains family. F-type ATPases have 2 components, CF(1) - the catalytic core - and CF(0) - the membrane proton channel. CF(1) has five subunits: alpha(3), beta(3), gamma(1), delta(1), epsilon(1). CF(0) has four main subunits: a(1), b(1), b'(1) and c(9-12).

The protein localises to the cellular thylakoid membrane. The enzyme catalyses ATP + H2O + 4 H(+)(in) = ADP + phosphate + 5 H(+)(out). In terms of biological role, produces ATP from ADP in the presence of a proton gradient across the membrane. The alpha chain is a regulatory subunit. The chain is ATP synthase subunit alpha from Parasynechococcus marenigrum (strain WH8102).